We begin with the raw amino-acid sequence, 160 residues long: Major strawberry allergen Fra a 1-D (160 aa).

The protein belongs to the BetVI family. As to quaternary structure, monomer.

This Fragaria ananassa (Strawberry) protein is Major strawberry allergen Fra a 1-D.